The chain runs to 520 residues: Hydroxymethylglutaryl-CoA synthase, cytoplasmic (520 aa).

Residue Ser4 is modified to Phosphoserine. (3S)-3-hydroxy-3-methylglutaryl-CoA is bound by residues Asp43 and Ala44. Residue 44-46 coordinates CoA; that stretch reads AGK. N6-acetyllysine is present on Lys46. Catalysis depends on Glu95, which acts as the Proton donor/acceptor. (3S)-3-hydroxy-3-methylglutaryl-CoA contacts are provided by Cys129, Asn167, Thr171, Ser221, and His264. Cys129 functions as the Acyl-thioester intermediate in the catalytic mechanism. Asn167 contributes to the CoA binding site. A CoA-binding site is contributed by Ser221. Residue His264 is the Proton donor/acceptor of the active site. CoA contacts are provided by Lys269 and Lys273. The (3S)-3-hydroxy-3-methylglutaryl-CoA site is built by Lys273, Asn343, and Ser377. At Lys273 the chain carries N6-acetyllysine. The segment at 487–520 is disordered; the sequence is NTATEHIPSPAKKVPRLPATSGEPESAVISNGEH. Phosphoserine is present on residues Ser495 and Ser516.

Belongs to the thiolase-like superfamily. HMG-CoA synthase family. In terms of assembly, homodimer.

The protein localises to the cytoplasm. It carries out the reaction acetoacetyl-CoA + acetyl-CoA + H2O = (3S)-3-hydroxy-3-methylglutaryl-CoA + CoA + H(+). It functions in the pathway metabolic intermediate biosynthesis; (R)-mevalonate biosynthesis; (R)-mevalonate from acetyl-CoA: step 2/3. Functionally, catalyzes the condensation of acetyl-CoA with acetoacetyl-CoA to form HMG-CoA, which is converted by HMG-CoA reductase (HMGCR) into mevalonate, a precursor for cholesterol synthesis. This chain is Hydroxymethylglutaryl-CoA synthase, cytoplasmic, found in Rattus norvegicus (Rat).